Consider the following 78-residue polypeptide: UPF0270 protein ECA4061 (78 aa).

It belongs to the UPF0270 family.

This chain is UPF0270 protein ECA4061, found in Pectobacterium atrosepticum (strain SCRI 1043 / ATCC BAA-672) (Erwinia carotovora subsp. atroseptica).